We begin with the raw amino-acid sequence, 316 residues long: MSLFDWFANRQKTEPKVQQQQEREIADGLWTKCPNCGVLAYTKDLLANQLVCLDCGHHNRVESEERIRQLVDANTWNCLDEQIRPTDPLKFRDRKSYSDRLRETQEKTGLTDAVRTGTGTIDGLPLALGVMDFRFMGGSMGSVVGEKLCRLTEQATDESLPLVIICASGGARMQEGMLSLMQMAKISGALNRHREAKLLYIPVLTNPTTGGVTASFAMLGDIIIAEPKATIGFAGKRVIEQTLREKLPEGFQTSEYLLKHGFVDAIVPRTHLKKTLAQLISLHQPFFPLLSPLNSHHHYGQPELIPLKTAQGQTTV.

Residues Leu29 to His298 enclose the CoA carboxyltransferase N-terminal domain. Zn(2+) is bound by residues Cys33, Cys36, Cys52, and Cys55. A C4-type zinc finger spans residues Cys33–Cys55.

It belongs to the AccD/PCCB family. As to quaternary structure, acetyl-CoA carboxylase is a heterohexamer composed of biotin carboxyl carrier protein (AccB), biotin carboxylase (AccC) and two subunits each of ACCase subunit alpha (AccA) and ACCase subunit beta (AccD). Requires Zn(2+) as cofactor.

Its subcellular location is the cytoplasm. It catalyses the reaction N(6)-carboxybiotinyl-L-lysyl-[protein] + acetyl-CoA = N(6)-biotinyl-L-lysyl-[protein] + malonyl-CoA. It participates in lipid metabolism; malonyl-CoA biosynthesis; malonyl-CoA from acetyl-CoA: step 1/1. Functionally, component of the acetyl coenzyme A carboxylase (ACC) complex. Biotin carboxylase (BC) catalyzes the carboxylation of biotin on its carrier protein (BCCP) and then the CO(2) group is transferred by the transcarboxylase to acetyl-CoA to form malonyl-CoA. The chain is Acetyl-coenzyme A carboxylase carboxyl transferase subunit beta from Microcystis aeruginosa (strain NIES-843 / IAM M-2473).